The following is a 117-amino-acid chain: Nascent polypeptide-associated complex protein (117 aa).

The NAC-A/B domain occupies 9 to 77 (PKQLKQMQRA…ARECDLEAEV (69 aa)).

Belongs to the NAC-alpha family. As to quaternary structure, homodimer. Interacts with the ribosome. Binds ribosomal RNA.

In terms of biological role, contacts the emerging nascent chain on the ribosome. The chain is Nascent polypeptide-associated complex protein from Methanothermobacter marburgensis (strain ATCC BAA-927 / DSM 2133 / JCM 14651 / NBRC 100331 / OCM 82 / Marburg) (Methanobacterium thermoautotrophicum).